A 144-amino-acid polypeptide reads, in one-letter code: Large ribosomal subunit protein uL13 (144 aa).

The protein belongs to the universal ribosomal protein uL13 family. As to quaternary structure, part of the 50S ribosomal subunit.

Functionally, this protein is one of the early assembly proteins of the 50S ribosomal subunit, although it is not seen to bind rRNA by itself. It is important during the early stages of 50S assembly. The polypeptide is Large ribosomal subunit protein uL13 (Mycoplasmopsis agalactiae (strain NCTC 10123 / CIP 59.7 / PG2) (Mycoplasma agalactiae)).